Here is a 216-residue protein sequence, read N- to C-terminus: DDB1- and CUL4-associated factor 16 (216 aa).

The disordered stretch occupies residues 1 to 42 (MGPRNPSPDHLSESESEEEENISYLNESSGEEWDSSEEEDSM). Residues 29-41 (SGEEWDSSEEEDS) are compositionally biased toward acidic residues. Residue K61 is modified to N6-acetyllysine.

Interacts with DDB1 and CUL4A.

Its subcellular location is the nucleus. It functions in the pathway protein modification; protein ubiquitination. In terms of biological role, functions as a substrate recognition component for CUL4-DDB1 E3 ubiquitin-protein ligase complex, which mediates ubiquitination and proteasome-dependent degradation of nuclear proteins. The polypeptide is DDB1- and CUL4-associated factor 16 (Homo sapiens (Human)).